The sequence spans 363 residues: UDP-N-acetylglucosamine--N-acetylmuramyl-(pentapeptide) pyrophosphoryl-undecaprenol N-acetylglucosamine transferase (363 aa).

Residues 10–12, N124, S195, I250, and Q295 each bind UDP-N-acetyl-alpha-D-glucosamine; that span reads TGG.

The protein belongs to the glycosyltransferase 28 family. MurG subfamily.

It localises to the cell membrane. The catalysed reaction is di-trans,octa-cis-undecaprenyl diphospho-N-acetyl-alpha-D-muramoyl-L-alanyl-D-glutamyl-meso-2,6-diaminopimeloyl-D-alanyl-D-alanine + UDP-N-acetyl-alpha-D-glucosamine = di-trans,octa-cis-undecaprenyl diphospho-[N-acetyl-alpha-D-glucosaminyl-(1-&gt;4)]-N-acetyl-alpha-D-muramoyl-L-alanyl-D-glutamyl-meso-2,6-diaminopimeloyl-D-alanyl-D-alanine + UDP + H(+). It functions in the pathway cell wall biogenesis; peptidoglycan biosynthesis. In terms of biological role, cell wall formation. Catalyzes the transfer of a GlcNAc subunit on undecaprenyl-pyrophosphoryl-MurNAc-pentapeptide (lipid intermediate I) to form undecaprenyl-pyrophosphoryl-MurNAc-(pentapeptide)GlcNAc (lipid intermediate II). The sequence is that of UDP-N-acetylglucosamine--N-acetylmuramyl-(pentapeptide) pyrophosphoryl-undecaprenol N-acetylglucosamine transferase from Listeria monocytogenes serotype 4b (strain CLIP80459).